A 243-amino-acid polypeptide reads, in one-letter code: uncharacterized protein (243 aa).

The signal sequence occupies residues M1–A19. N136 is a glycosylation site (N-linked (GlcNAc...) asparagine).

The protein resides in the secreted. This is an uncharacterized protein from Homo sapiens (Human).